The chain runs to 419 residues: 5-methylthioadenosine/S-adenosylhomocysteine deaminase (419 aa).

Residues His58 and His60 each coordinate Zn(2+). Substrate-binding residues include Glu87 and His179. His206 contributes to the Zn(2+) binding site. Positions 209 and 294 each coordinate substrate. Residue Asp294 participates in Zn(2+) binding.

This sequence belongs to the metallo-dependent hydrolases superfamily. MTA/SAH deaminase family. The cofactor is Zn(2+).

It catalyses the reaction S-adenosyl-L-homocysteine + H2O + H(+) = S-inosyl-L-homocysteine + NH4(+). The catalysed reaction is S-methyl-5'-thioadenosine + H2O + H(+) = S-methyl-5'-thioinosine + NH4(+). In terms of biological role, catalyzes the deamination of 5-methylthioadenosine and S-adenosyl-L-homocysteine into 5-methylthioinosine and S-inosyl-L-homocysteine, respectively. Is also able to deaminate adenosine. This chain is 5-methylthioadenosine/S-adenosylhomocysteine deaminase, found in Pyrococcus furiosus (strain ATCC 43587 / DSM 3638 / JCM 8422 / Vc1).